Here is a 402-residue protein sequence, read N- to C-terminus: Phosphoglycerate kinase (402 aa).

Residues 24 to 26 (DFN), Arg-40, 63 to 66 (HFGR), Arg-122, and Arg-155 each bind substrate. ATP-binding positions include Lys-206, Gly-297, Glu-328, and 357–360 (GGDS).

Belongs to the phosphoglycerate kinase family. In terms of assembly, monomer.

It is found in the cytoplasm. It carries out the reaction (2R)-3-phosphoglycerate + ATP = (2R)-3-phospho-glyceroyl phosphate + ADP. Its pathway is carbohydrate degradation; glycolysis; pyruvate from D-glyceraldehyde 3-phosphate: step 2/5. The polypeptide is Phosphoglycerate kinase (Synechococcus sp. (strain RCC307)).